The following is an 88-amino-acid chain: Small ribosomal subunit protein bS16 (88 aa).

Belongs to the bacterial ribosomal protein bS16 family.

The polypeptide is Small ribosomal subunit protein bS16 (Pelotomaculum thermopropionicum (strain DSM 13744 / JCM 10971 / SI)).